We begin with the raw amino-acid sequence, 146 residues long: Hemoglobin subunit beta (146 aa).

An N-acetylvaline modification is found at Val-1. The Globin domain occupies 2 to 146 (HLTNEEKTAV…VATALAHKYH (145 aa)). Ser-44 carries the phosphoserine modification. Lys-59 bears the N6-acetyllysine mark. His-63 serves as a coordination point for heme b. Position 82 is an N6-acetyllysine (Lys-82). His-92 lines the heme b pocket. Cys-93 carries the post-translational modification S-nitrosocysteine. Lys-144 carries the N6-acetyllysine modification.

The protein belongs to the globin family. In terms of assembly, heterotetramer of two alpha chains and two beta chains. As to expression, red blood cells.

Involved in oxygen transport from the lung to the various peripheral tissues. The polypeptide is Hemoglobin subunit beta (HBB) (Lyroderma lyra (Greater Asian false-vampire bat)).